Reading from the N-terminus, the 341-residue chain is Anthranilate phosphoribosyltransferase (341 aa).

5-phospho-alpha-D-ribose 1-diphosphate is bound by residues glycine 83, serine 91, 93 to 96 (NTST), 111 to 115 (KHGNR), and serine 123. Residue glycine 83 coordinates anthranilate. Position 95 (serine 95) interacts with Mg(2+). Asparagine 114 lines the anthranilate pocket. Arginine 169 is an anthranilate binding site. Mg(2+) is bound by residues aspartate 228 and glutamate 229.

This sequence belongs to the anthranilate phosphoribosyltransferase family. As to quaternary structure, homodimer. The cofactor is Mg(2+).

The enzyme catalyses N-(5-phospho-beta-D-ribosyl)anthranilate + diphosphate = 5-phospho-alpha-D-ribose 1-diphosphate + anthranilate. It participates in amino-acid biosynthesis; L-tryptophan biosynthesis; L-tryptophan from chorismate: step 2/5. Functionally, catalyzes the transfer of the phosphoribosyl group of 5-phosphorylribose-1-pyrophosphate (PRPP) to anthranilate to yield N-(5'-phosphoribosyl)-anthranilate (PRA). The protein is Anthranilate phosphoribosyltransferase of Hyphomonas neptunium (strain ATCC 15444).